Consider the following 536-residue polypeptide: GATA zinc finger domain-containing protein 9 (536 aa).

2 stretches are compositionally biased toward polar residues: residues 1–20 and 36–55; these read MTSFLLFNPGSLQQQQQPHS and CQSSFSTPLGGSNGINNPNA. 5 disordered regions span residues 1–77, 183–211, 237–258, 273–342, and 370–423; these read MTSF…LSGS, SSSLSSEDDDCCYETEEDDNGEDGEVVRS, RSAFKKNKKDYHHGSSAGGGGS, QLHY…GFVQ, and ALFS…NISS. Residues 56–72 show a composition bias toward low complexity; it reads TTNNTTTTTTTTTTTTN. The segment covering 188–206 has biased composition (acidic residues); sequence SEDDDCCYETEEDDNGEDG. The span at 237–247 shows a compositional bias: basic residues; sequence RSAFKKNKKDY. Positions 273-283 are enriched in polar residues; the sequence is QLHYSNSMTDN. 2 stretches are compositionally biased toward low complexity: residues 318 to 335 and 379 to 399; these read SNSNNNNNNNNNNNNNNN and PSPTLGSSCGSSSPGLNNSGN. A GATA-type zinc finger spans residues 479 to 504; the sequence is CRHCGTTDTPEWRRGPDGRKSLCNAC.

In Dictyostelium discoideum (Social amoeba), this protein is GATA zinc finger domain-containing protein 9 (gtaI).